Consider the following 75-residue polypeptide: Small ribosomal subunit protein bS18c (75 aa).

Belongs to the bacterial ribosomal protein bS18 family. As to quaternary structure, part of the 30S ribosomal subunit.

The protein resides in the plastid. The protein localises to the chloroplast. The chain is Small ribosomal subunit protein bS18c from Adiantum capillus-veneris (Maidenhair fern).